Reading from the N-terminus, the 79-residue chain is Acyl carrier protein 1 (79 aa).

A Carrier domain is found at 2–77 (DNIEQRVKKI…QAIDYARANV (76 aa)). At serine 37 the chain carries O-(pantetheine 4'-phosphoryl)serine.

The protein belongs to the acyl carrier protein (ACP) family. 4'-phosphopantetheine is transferred from CoA to a specific serine of apo-ACP by AcpS. This modification is essential for activity because fatty acids are bound in thioester linkage to the sulfhydryl of the prosthetic group.

Its subcellular location is the cytoplasm. Its pathway is lipid metabolism; fatty acid biosynthesis. Its function is as follows. Carrier of the growing fatty acid chain in fatty acid biosynthesis. The protein is Acyl carrier protein 1 of Ralstonia nicotianae (strain ATCC BAA-1114 / GMI1000) (Ralstonia solanacearum).